The following is a 290-amino-acid chain: Shikimate dehydrogenase (NADP(+)) (290 aa).

Shikimate contacts are provided by residues 20–22 (SLS) and Thr-67. Lys-71 (proton acceptor) is an active-site residue. 2 residues coordinate shikimate: Asn-92 and Asp-107. NADP(+) contacts are provided by residues 130–134 (GAGGA) and Leu-227. Tyr-229 provides a ligand contact to shikimate. An NADP(+)-binding site is contributed by Gly-250.

It belongs to the shikimate dehydrogenase family. Homodimer.

The enzyme catalyses shikimate + NADP(+) = 3-dehydroshikimate + NADPH + H(+). Its pathway is metabolic intermediate biosynthesis; chorismate biosynthesis; chorismate from D-erythrose 4-phosphate and phosphoenolpyruvate: step 4/7. Involved in the biosynthesis of the chorismate, which leads to the biosynthesis of aromatic amino acids. Catalyzes the reversible NADPH linked reduction of 3-dehydroshikimate (DHSA) to yield shikimate (SA). The polypeptide is Shikimate dehydrogenase (NADP(+)) (Syntrophomonas wolfei subsp. wolfei (strain DSM 2245B / Goettingen)).